The sequence spans 278 residues: Ribosomal RNA small subunit methyltransferase A (278 aa).

Residues Asn-18, Leu-20, Gly-45, Glu-66, Asp-89, and Asn-110 each coordinate S-adenosyl-L-methionine.

The protein belongs to the class I-like SAM-binding methyltransferase superfamily. rRNA adenine N(6)-methyltransferase family. RsmA subfamily.

It localises to the cytoplasm. It catalyses the reaction adenosine(1518)/adenosine(1519) in 16S rRNA + 4 S-adenosyl-L-methionine = N(6)-dimethyladenosine(1518)/N(6)-dimethyladenosine(1519) in 16S rRNA + 4 S-adenosyl-L-homocysteine + 4 H(+). Its function is as follows. Specifically dimethylates two adjacent adenosines (A1518 and A1519) in the loop of a conserved hairpin near the 3'-end of 16S rRNA in the 30S particle. May play a critical role in biogenesis of 30S subunits. This Cupriavidus metallidurans (strain ATCC 43123 / DSM 2839 / NBRC 102507 / CH34) (Ralstonia metallidurans) protein is Ribosomal RNA small subunit methyltransferase A.